The following is an 864-amino-acid chain: Sine oculis-binding protein homolog (864 aa).

The segment covering 1–14 has biased composition (basic and acidic residues); it reads MAEMEKEGRPPENK. Residues 1-25 are disordered; sequence MAEMEKEGRPPENKRSRKPAHPVKR. 2 FCS-type zinc fingers span residues 142–180 and 216–256; these read DEVS…KCFA and FKNN…KCLN. Disordered stretches follow at residues 304-360, 413-484, and 550-616; these read LTDA…ETPS, RGPP…PGAP, and KPPN…RGRG. Composition is skewed to low complexity over residues 314 to 335 and 417 to 433; these read PVAA…VSPS and HHAS…MLPG. The segment covering 460-484 has biased composition (pro residues); it reads IHPPSTPTMPGNPPGLLPPPPPGAP. 2 stretches are compositionally biased toward low complexity: residues 565-582 and 590-603; these read SAPG…GRSL and GSSK…GSSG. An SUMO interaction motif 1 (SIM); mediates the binding to polysumoylated substrates motif is present at residues 618 to 622; the sequence is VVDLT. Ser627 is subject to Phosphoserine. The SUMO interaction motif 2 (SIM); mediates the binding to polysumoylated substrates motif lies at 648–652; it reads VIDLT. Lys672 participates in a covalent cross-link: Glycyl lysine isopeptide (Lys-Gly) (interchain with G-Cter in SUMO2). Phosphoserine is present on Ser694. The segment at 725-750 is disordered; it reads APAEAKGAEPPPEQPPPPAPPKKLLS. Positions 733 to 745 are enriched in pro residues; that stretch reads EPPPEQPPPPAPP.

Belongs to the SOBP family. In terms of assembly, interacts (via SIM domains) with SUMO1 and SUMO2.

Functionally, implicated in development of the cochlea. This chain is Sine oculis-binding protein homolog, found in Rattus norvegicus (Rat).